Reading from the N-terminus, the 645-residue chain is TBC1 domain family member 17 (645 aa).

Residues 57-85 form a disordered region; that stretch reads PTQILFKKDPSRGEPSTSEEEPTFDPGYE. The segment at 217–309 is required for interaction with OPTN; that stretch reads DPYSTTFSSF…PELKNRIFSG (93 aa). A Rab-GAP TBC domain is found at 310–520; the sequence is GLSPGLRREA…RLWEVLWTGL (211 aa). Residues 596 to 645 form a disordered region; that stretch reads QPEEPSSPSPPVSPMPLSPTRAPLPPPLPEEVIPQPDSSLEILPEDEDGA. A compositionally biased stretch (pro residues) spans 600 to 624; it reads PSSPSPPVSPMPLSPTRAPLPPPLP. Ser602, Ser604, and Ser608 each carry phosphoserine. A Phosphothreonine modification is found at Thr615.

In terms of assembly, interacts with OPTN; this interaction mediates TBC1D17 transient association with Rab8.

Its subcellular location is the cytoplasmic vesicle. It localises to the autophagosome. It is found in the cytoplasm. The protein localises to the recycling endosome. Functionally, probable GTPase-activating protein that inhibits RAB8A/B function. Reduces Rab8 recruitment to tubules emanating from the endocytic recycling compartment (ERC) and inhibits Rab8-mediated endocytic trafficking, such as that of transferrin receptor (TfR). Involved in regulation of autophagy. The sequence is that of TBC1 domain family member 17 (Tbc1d17) from Mus musculus (Mouse).